The chain runs to 364 residues: Isopentenyl-diphosphate delta-isomerase (364 aa).

The span at 1–13 (MSSAQRKDDHVRL) shows a compositional bias: basic and acidic residues. Residues 1–24 (MSSAQRKDDHVRLATEQQRAHSGR) are disordered. 6 to 7 (RK) contacts substrate. FMN is bound by residues 64-66 (AMT), Ser-94, and Asn-123. A substrate-binding site is contributed by 94–96 (SMH). Gln-153 provides a ligand contact to substrate. Glu-154 serves as a coordination point for Mg(2+). Residues Lys-185, Ser-210, Thr-215, 259-261 (GIR), and 280-281 (SG) contribute to the FMN site.

It belongs to the IPP isomerase type 2 family. Homooctamer. Dimer of tetramers. FMN is required as a cofactor. Requires NADPH as cofactor. Mg(2+) serves as cofactor.

It is found in the cytoplasm. The enzyme catalyses isopentenyl diphosphate = dimethylallyl diphosphate. Its function is as follows. Involved in the biosynthesis of isoprenoids. Catalyzes the 1,3-allylic rearrangement of the homoallylic substrate isopentenyl (IPP) to its allylic isomer, dimethylallyl diphosphate (DMAPP). This chain is Isopentenyl-diphosphate delta-isomerase, found in Kitasatospora griseola (Streptomyces griseolosporeus).